The primary structure comprises 314 residues: tRNA dimethylallyltransferase (314 aa).

ATP is bound at residue 9–16 (GPTAVGKT). 11 to 16 (TAVGKT) contributes to the substrate binding site. The interval 34–37 (DSVQ) is interaction with substrate tRNA.

It belongs to the IPP transferase family. Monomer. Mg(2+) serves as cofactor.

The catalysed reaction is adenosine(37) in tRNA + dimethylallyl diphosphate = N(6)-dimethylallyladenosine(37) in tRNA + diphosphate. Functionally, catalyzes the transfer of a dimethylallyl group onto the adenine at position 37 in tRNAs that read codons beginning with uridine, leading to the formation of N6-(dimethylallyl)adenosine (i(6)A). This is tRNA dimethylallyltransferase from Desulfitobacterium hafniense (strain Y51).